The sequence spans 58 residues: Photosystem II reaction center protein K (58 aa).

A propeptide spanning residues 1-21 (MLVISNVYPSNLFTLINPFFA) is cleaved from the precursor. Residues 29–49 (IFDPIVDVMPIIPVFFFLLAF) traverse the membrane as a helical segment.

It belongs to the PsbK family. In terms of assembly, PSII is composed of 1 copy each of membrane proteins PsbA, PsbB, PsbC, PsbD, PsbE, PsbF, PsbH, PsbI, PsbJ, PsbK, PsbL, PsbM, PsbT, PsbX, PsbY, PsbZ, Psb30/Ycf12, at least 3 peripheral proteins of the oxygen-evolving complex and a large number of cofactors. It forms dimeric complexes.

It localises to the plastid. It is found in the chloroplast thylakoid membrane. One of the components of the core complex of photosystem II (PSII). PSII is a light-driven water:plastoquinone oxidoreductase that uses light energy to abstract electrons from H(2)O, generating O(2) and a proton gradient subsequently used for ATP formation. It consists of a core antenna complex that captures photons, and an electron transfer chain that converts photonic excitation into a charge separation. The protein is Photosystem II reaction center protein K of Psilotum nudum (Whisk fern).